Here is a 146-residue protein sequence, read N- to C-terminus: Globin-1 (146 aa).

A Globin domain is found at 9–146 (QLTADVKKDL…KLVAVVQAAL (138 aa)). His-101 is a binding site for heme b.

It belongs to the globin family. As to quaternary structure, homodimer.

The protein localises to the cytoplasm. This is Globin-1 from Anadara broughtonii (Blood clam).